A 159-amino-acid chain; its full sequence is Transcriptional repressor NrdR (159 aa).

The segment at 3 to 34 (CPFCRHDDTQVVDSRVSEDGAAIRRRRRCSAC) is a zinc-finger region. One can recognise an ATP-cone domain in the interval 49-139 (PFVVKKDGSR…VYRRFEDVSE (91 aa)).

This sequence belongs to the NrdR family. It depends on Zn(2+) as a cofactor.

Its function is as follows. Negatively regulates transcription of bacterial ribonucleotide reductase nrd genes and operons by binding to NrdR-boxes. The sequence is that of Transcriptional repressor NrdR from Burkholderia cenocepacia (strain ATCC BAA-245 / DSM 16553 / LMG 16656 / NCTC 13227 / J2315 / CF5610) (Burkholderia cepacia (strain J2315)).